The primary structure comprises 357 residues: Uroporphyrinogen decarboxylase (357 aa).

Substrate contacts are provided by residues 27–31 (RQAGR), Asp77, Tyr154, Ser209, and His330.

Belongs to the uroporphyrinogen decarboxylase family. Homodimer.

It is found in the cytoplasm. The catalysed reaction is uroporphyrinogen III + 4 H(+) = coproporphyrinogen III + 4 CO2. It participates in porphyrin-containing compound metabolism; protoporphyrin-IX biosynthesis; coproporphyrinogen-III from 5-aminolevulinate: step 4/4. Catalyzes the decarboxylation of four acetate groups of uroporphyrinogen-III to yield coproporphyrinogen-III. The protein is Uroporphyrinogen decarboxylase of Acinetobacter baumannii (strain AB0057).